A 321-amino-acid chain; its full sequence is L-carnitine dehydrogenase (321 aa).

14 to 19 (GAGVIG) is a binding site for NAD(+).

The protein belongs to the 3-hydroxyacyl-CoA dehydrogenase family. L-carnitine dehydrogenase subfamily. Homodimer.

Its subcellular location is the cytoplasm. It carries out the reaction carnitine + NAD(+) = 3-dehydrocarnitine + NADH + H(+). It functions in the pathway amine and polyamine metabolism; carnitine metabolism. In terms of biological role, catalyzes the NAD(+)-dependent oxidation of L-carnitine to 3-dehydrocarnitine. In Burkholderia mallei (strain ATCC 23344), this protein is L-carnitine dehydrogenase.